We begin with the raw amino-acid sequence, 847 residues long: Protein translocase subunit SecA (847 aa).

ATP-binding positions include glutamine 87, 105–109, and aspartate 495; that span reads GEGKT. The tract at residues 828–847 is disordered; sequence SSNSPSDARNRPIEHDDNAV. A compositionally biased stretch (basic and acidic residues) spans 835–847; sequence ARNRPIEHDDNAV.

This sequence belongs to the SecA family. Monomer and homodimer. Part of the essential Sec protein translocation apparatus which comprises SecA, SecYEG and auxiliary proteins SecDF. Other proteins may also be involved.

The protein localises to the cell membrane. It localises to the cytoplasm. It catalyses the reaction ATP + H2O + cellular proteinSide 1 = ADP + phosphate + cellular proteinSide 2.. Its function is as follows. Part of the Sec protein translocase complex. Interacts with the SecYEG preprotein conducting channel. Has a central role in coupling the hydrolysis of ATP to the transfer of proteins into and across the cell membrane, serving as an ATP-driven molecular motor driving the stepwise translocation of polypeptide chains across the membrane. In Tropheryma whipplei (strain TW08/27) (Whipple's bacillus), this protein is Protein translocase subunit SecA.